Reading from the N-terminus, the 229-residue chain is MATELTWHDVLADEKQQPYFINTLHTVAGERQSGITVYPPQKDVFNAFRFTELGDVKVVILGQDPYHGPGQAHGLAFSVRPGIAPPPSLVNMYKELEASIPGFVRPPHGYLESWARQGVLLLNTVLTVRAGQAHSHASLGWETFTDKVISLINQYREGVVFLLWGSHAQKKGAIIDPLRHHILKAPHPSPLSAHRGFFGCNHFALTNQWLEQHGEKPIDWTPVLPAESE.

D64 (proton acceptor) is an active-site residue.

Belongs to the uracil-DNA glycosylase (UDG) superfamily. UNG family.

The protein localises to the cytoplasm. It carries out the reaction Hydrolyzes single-stranded DNA or mismatched double-stranded DNA and polynucleotides, releasing free uracil.. In terms of biological role, excises uracil residues from the DNA which can arise as a result of misincorporation of dUMP residues by DNA polymerase or due to deamination of cytosine. The protein is Uracil-DNA glycosylase of Salmonella arizonae (strain ATCC BAA-731 / CDC346-86 / RSK2980).